Here is an 894-residue protein sequence, read N- to C-terminus: Protein translocase subunit SecA (894 aa).

ATP-binding positions include Gln-87, 105 to 109 (GEGKT), and Asp-512. Residues 857–894 (FNLGDEPEAQQPVTSKKVGRNEPCPCGSGKKYKQCCGK) are disordered. The Zn(2+) site is built by Cys-880, Cys-882, Cys-891, and Cys-892.

This sequence belongs to the SecA family. Monomer and homodimer. Part of the essential Sec protein translocation apparatus which comprises SecA, SecYEG and auxiliary proteins SecDF-YajC and YidC. Zn(2+) is required as a cofactor.

It localises to the cell inner membrane. The protein localises to the cytoplasm. It catalyses the reaction ATP + H2O + cellular proteinSide 1 = ADP + phosphate + cellular proteinSide 2.. Functionally, part of the Sec protein translocase complex. Interacts with the SecYEG preprotein conducting channel. Has a central role in coupling the hydrolysis of ATP to the transfer of proteins into and across the cell membrane, serving as an ATP-driven molecular motor driving the stepwise translocation of polypeptide chains across the membrane. The protein is Protein translocase subunit SecA of Geotalea uraniireducens (strain Rf4) (Geobacter uraniireducens).